The following is a 1411-amino-acid chain: DNA-directed RNA polymerase subunit beta' (1411 aa).

Zn(2+) contacts are provided by Cys-70, Cys-72, Cys-85, and Cys-88. Mg(2+) contacts are provided by Asp-460, Asp-462, and Asp-464. Residues Cys-814, Cys-888, Cys-895, and Cys-898 each contribute to the Zn(2+) site.

It belongs to the RNA polymerase beta' chain family. In terms of assembly, the RNAP catalytic core consists of 2 alpha, 1 beta, 1 beta' and 1 omega subunit. When a sigma factor is associated with the core the holoenzyme is formed, which can initiate transcription. The cofactor is Mg(2+). It depends on Zn(2+) as a cofactor.

It carries out the reaction RNA(n) + a ribonucleoside 5'-triphosphate = RNA(n+1) + diphosphate. Functionally, DNA-dependent RNA polymerase catalyzes the transcription of DNA into RNA using the four ribonucleoside triphosphates as substrates. The polypeptide is DNA-directed RNA polymerase subunit beta' (Idiomarina loihiensis (strain ATCC BAA-735 / DSM 15497 / L2-TR)).